The chain runs to 637 residues: Chaperone protein HtpG (637 aa).

Positions 1–345 (MSQQETHGFQ…SNDLPLNVSR (345 aa)) are a; substrate-binding. Positions 346 to 562 (EILQDNHITK…EGEMSSQMIK (217 aa)) are b. Positions 563–637 (LMQAAGQPVP…MNQMLLANLK (75 aa)) are c.

This sequence belongs to the heat shock protein 90 family. In terms of assembly, homodimer.

It is found in the cytoplasm. Molecular chaperone. Has ATPase activity. This is Chaperone protein HtpG from Shewanella sp. (strain MR-7).